The chain runs to 83 residues: DNA-directed RNA polymerase subunit omega (83 aa).

This sequence belongs to the RNA polymerase subunit omega family. As to quaternary structure, the RNAP catalytic core consists of 2 alpha, 1 beta, 1 beta' and 1 omega subunit. When a sigma factor is associated with the core the holoenzyme is formed, which can initiate transcription.

It carries out the reaction RNA(n) + a ribonucleoside 5'-triphosphate = RNA(n+1) + diphosphate. In terms of biological role, promotes RNA polymerase assembly. Latches the N- and C-terminal regions of the beta' subunit thereby facilitating its interaction with the beta and alpha subunits. This chain is DNA-directed RNA polymerase subunit omega, found in Chromohalobacter salexigens (strain ATCC BAA-138 / DSM 3043 / CIP 106854 / NCIMB 13768 / 1H11).